We begin with the raw amino-acid sequence, 399 residues long: Guanine nucleotide-binding protein negative regulator 1 (399 aa).

WD repeat units lie at residues 44 to 83, 105 to 145, 150 to 194, 207 to 247, 252 to 292, and 296 to 337; these read KPLN…LSKK, YSYS…NKAS, DHQE…VMTT, SLKG…PCQL, ERGN…DMVY, and GHRG…EETH.

In terms of assembly, interacts with gpa1.

The protein resides in the cytoplasm. Its function is as follows. Negatively regulates the pheromone-response pathway. Acts as a structural mimic of the G protein beta subunit thereby interacting with gpa1 which then inhibits gpa1 signaling. This Schizosaccharomyces pombe (strain 972 / ATCC 24843) (Fission yeast) protein is Guanine nucleotide-binding protein negative regulator 1 (gnr1).